The sequence spans 115 residues: NADH-ubiquinone oxidoreductase chain 3 (115 aa).

The next 3 helical transmembrane spans lie at 4 to 24 (LMAL…AFWL), 55 to 75 (FFLV…LLPL), and 84 to 104 (INIM…GLAY).

The protein belongs to the complex I subunit 3 family. In terms of assembly, core subunit of respiratory chain NADH dehydrogenase (Complex I) which is composed of 45 different subunits. Interacts with TMEM186. Interacts with TMEM242.

It is found in the mitochondrion inner membrane. The enzyme catalyses a ubiquinone + NADH + 5 H(+)(in) = a ubiquinol + NAD(+) + 4 H(+)(out). In terms of biological role, core subunit of the mitochondrial membrane respiratory chain NADH dehydrogenase (Complex I) which catalyzes electron transfer from NADH through the respiratory chain, using ubiquinone as an electron acceptor. Essential for the catalytic activity of complex I. This is NADH-ubiquinone oxidoreductase chain 3 from Peromyscus melanotis (Black-eared mouse).